Here is a 143-residue protein sequence, read N- to C-terminus: Holo-[acyl-carrier-protein] synthase (143 aa).

Mg(2+) is bound by residues Asp-9 and Glu-63.

It belongs to the P-Pant transferase superfamily. AcpS family. It depends on Mg(2+) as a cofactor.

It localises to the cytoplasm. The catalysed reaction is apo-[ACP] + CoA = holo-[ACP] + adenosine 3',5'-bisphosphate + H(+). Its function is as follows. Transfers the 4'-phosphopantetheine moiety from coenzyme A to a Ser of acyl-carrier-protein. The chain is Holo-[acyl-carrier-protein] synthase from Burkholderia pseudomallei (strain 1106a).